The chain runs to 62 residues: Beta-defensin 33 (62 aa).

Residues 1 to 20 (MRLLFLLFLLLVCLAQKTSG) form the signal peptide. Cystine bridges form between C30–C59, C37–C52, and C45–C60.

Belongs to the beta-defensin family.

It is found in the secreted. In terms of biological role, has antibacterial activity. The chain is Beta-defensin 33 (Defb33) from Rattus norvegicus (Rat).